A 473-amino-acid polypeptide reads, in one-letter code: G2/mitotic-specific cyclin-1 (473 aa).

A compositionally biased stretch (polar residues) spans 1–12 (MGSRNIVQQQNR). Disordered stretches follow at residues 1–23 (MGSR…AMKQ) and 134–155 (KEKP…APTL). Basic and acidic residues predominate over residues 134–147 (KEKPIEKEKAAEKS).

This sequence belongs to the cyclin family. Cyclin AB subfamily. Interacts with the CDC2 and CDK2 protein kinases to form a serine/threonine kinase holoenzyme complex. The cyclin subunit imparts substrate specificity to the complex.

Its function is as follows. Essential for the control of the cell cycle at the G2/M (mitosis) transition. G2/M cyclins accumulate steadily during G2 and are abruptly destroyed at mitosis. The sequence is that of G2/mitotic-specific cyclin-1 from Antirrhinum majus (Garden snapdragon).